The chain runs to 345 residues: Ubiquitin-associated domain-containing protein 2 (345 aa).

Residues 1-35 (MFTSTGSSGLYKAPLSKSLLLVPSALSLLLALLLP) form the signal peptide. Topologically, residues 36 to 91 (HCQKLFVYDLHAVKNDFQIWRLICGRIICLDLKDTFCSSLLIYNFRIFERRYGSRK) are extracellular. Residues 92–112 (FASFLLGSWVLSALFDFLLVE) form a helical membrane-spanning segment. Residues 113–125 (AMQYFFGITAASN) are Cytoplasmic-facing. The helical transmembrane segment at 126–146 (LPSGFLAPVFALFVPFYCSIP) threads the bilayer. The Extracellular portion of the chain corresponds to 147 to 163 (RVQVAQILGPLSITNKT). The N-linked (GlcNAc...) asparagine glycan is linked to N161. The chain crosses the membrane as a helical span at residues 164-184 (LIYILGLQLFTSGSYIWIVAI). Residues 185 to 345 (SGLMSGLCYN…NVATNFLLQH (161 aa)) lie on the Cytoplasmic side of the membrane. Positions 305–345 (EVSEEQVARLMEMGFSRGDALEALRASNNDLNVATNFLLQH) constitute a UBA domain.

As to quaternary structure, interacts with LMBR1L, FAF2, AMFR and VCP.

It localises to the endoplasmic reticulum membrane. Restricts trafficking of FAF2 from the endoplasmic reticulum to lipid droplets. In association with LMBR1L and E3 ubiquitin-protein ligase AMFR, negatively regulates the canonical Wnt signaling pathway in the lymphocytes by promoting the ubiquitin-mediated degradation of CTNNB1 and Wnt receptors FZD6 and LRP6. This Macaca fascicularis (Crab-eating macaque) protein is Ubiquitin-associated domain-containing protein 2 (UBAC2).